A 120-amino-acid chain; its full sequence is uncharacterized protein (120 aa).

2 helical membrane-spanning segments follow: residues 26–46 (PSTS…PAGM) and 57–77 (LLFA…LTLV).

The protein localises to the membrane. This is an uncharacterized protein from Saccharomyces cerevisiae (strain ATCC 204508 / S288c) (Baker's yeast).